A 209-amino-acid polypeptide reads, in one-letter code: Ribosomal RNA large subunit methyltransferase E (209 aa).

Residues Gly-63, Trp-65, Asp-83, Asp-99, and Asp-124 each coordinate S-adenosyl-L-methionine. Residue Lys-164 is the Proton acceptor of the active site.

Belongs to the class I-like SAM-binding methyltransferase superfamily. RNA methyltransferase RlmE family.

It is found in the cytoplasm. It catalyses the reaction uridine(2552) in 23S rRNA + S-adenosyl-L-methionine = 2'-O-methyluridine(2552) in 23S rRNA + S-adenosyl-L-homocysteine + H(+). Specifically methylates the uridine in position 2552 of 23S rRNA at the 2'-O position of the ribose in the fully assembled 50S ribosomal subunit. This is Ribosomal RNA large subunit methyltransferase E from Photobacterium profundum (strain SS9).